Here is a 299-residue protein sequence, read N- to C-terminus: Protein translocase subunit SecF (299 aa).

6 helical membrane passes run valine 14 to glycine 34, isoleucine 142 to leucine 162, isoleucine 166 to phenylalanine 186, tyrosine 193 to phenylalanine 213, leucine 245 to isoleucine 265, and leucine 270 to isoleucine 290.

This sequence belongs to the SecD/SecF family. SecF subfamily. Forms a complex with SecD. Part of the essential Sec protein translocation apparatus which comprises SecA, SecYEG and auxiliary proteins SecDF. Other proteins may also be involved.

The protein localises to the cell inner membrane. Part of the Sec protein translocase complex. Interacts with the SecYEG preprotein conducting channel. SecDF uses the proton motive force (PMF) to complete protein translocation after the ATP-dependent function of SecA. In Borreliella burgdorferi (strain ATCC 35210 / DSM 4680 / CIP 102532 / B31) (Borrelia burgdorferi), this protein is Protein translocase subunit SecF.